The following is a 520-amino-acid chain: TnpB-like protein L79 (520 aa).

A compositionally biased stretch (basic residues) spans 21 to 47; that stretch reads GSKTKKKVFVKKKPPDKKPLKKPVKKT. The tract at residues 21 to 52 is disordered; the sequence is GSKTKKKVFVKKKPPDKKPLKKPVKKTVKTDK. Cys-474, Cys-477, Cys-491, and Cys-494 together coordinate Zn(2+).

The protein in the central section; belongs to the transposase 2 family. It in the C-terminal section; belongs to the transposase 35 family.

This chain is TnpB-like protein L79, found in Acanthamoeba polyphaga mimivirus (APMV).